The following is a 37-amino-acid chain: Large ribosomal subunit protein bL36 (37 aa).

The protein belongs to the bacterial ribosomal protein bL36 family.

The chain is Large ribosomal subunit protein bL36 from Acidovorax ebreus (strain TPSY) (Diaphorobacter sp. (strain TPSY)).